Here is a 237-residue protein sequence, read N- to C-terminus: Ribose-5-phosphate isomerase A (237 aa).

Substrate contacts are provided by residues 29–32 (SGST), 86–89 (DGAD), and 99–102 (KGGG). The active-site Proton acceptor is the Glu108. Lys126 provides a ligand contact to substrate.

Belongs to the ribose 5-phosphate isomerase family. Homodimer.

The catalysed reaction is aldehydo-D-ribose 5-phosphate = D-ribulose 5-phosphate. It participates in carbohydrate degradation; pentose phosphate pathway; D-ribose 5-phosphate from D-ribulose 5-phosphate (non-oxidative stage): step 1/1. Its function is as follows. Catalyzes the reversible conversion of ribose-5-phosphate to ribulose 5-phosphate. The protein is Ribose-5-phosphate isomerase A of Prochlorococcus marinus (strain MIT 9312).